The following is a 440-amino-acid chain: Protein root UVB sensitive 3 (440 aa).

The next 3 helical transmembrane spans lie at 109–129, 154–174, and 232–252; these read IGATFQWFLRDFTGMLGGILF, IGMLMDLLSPLFPSAFIVVVC, and FTSGNPMAIWLSFLSLTVFHM.

Belongs to the RUS1 family.

It localises to the membrane. The polypeptide is Protein root UVB sensitive 3 (Arabidopsis thaliana (Mouse-ear cress)).